The sequence spans 274 residues: Triosephosphate isomerase (274 aa).

13 to 15 is a substrate binding site; it reads NWK. Histidine 98 functions as the Electrophile in the catalytic mechanism. Glutamate 170 (proton acceptor) is an active-site residue. The substrate site is built by glycine 176 and serine 216.

The protein belongs to the triosephosphate isomerase family. Homodimer.

The protein localises to the cytoplasm. It catalyses the reaction D-glyceraldehyde 3-phosphate = dihydroxyacetone phosphate. Its pathway is carbohydrate biosynthesis; gluconeogenesis. It functions in the pathway carbohydrate degradation; glycolysis; D-glyceraldehyde 3-phosphate from glycerone phosphate: step 1/1. Functionally, involved in the gluconeogenesis. Catalyzes stereospecifically the conversion of dihydroxyacetone phosphate (DHAP) to D-glyceraldehyde-3-phosphate (G3P). This chain is Triosephosphate isomerase, found in Onion yellows phytoplasma (strain OY-M).